Reading from the N-terminus, the 418-residue chain is Protease LasA (418 aa).

The first 31 residues, 1–31, serve as a signal peptide directing secretion; it reads MQHKRSRAMASPRSPFLFVLLALAVGGTANA. Residues 32 to 236 constitute a propeptide that is removed on maturation; sequence HDDGLPAFRY…ARQLQAKAAL (205 aa). Zn(2+)-binding residues include His-259 and Asp-272. Cys-301 and Cys-347 form a disulfide bridge. Residues His-317 and His-356 each act as proton donor/acceptor in the active site. His-358 contacts Zn(2+). The cysteines at positions 391 and 406 are disulfide-linked.

Belongs to the peptidase M23A family. It depends on Zn(2+) as a cofactor. In terms of processing, processing of pro-LasA can occur extracellularly and requires elastase (lasB). Secretion and processing may be linked.

It localises to the secreted. Involved in proteolysis and elastolysis (degradation of the host protein elastin). Has staphylolytic activity (degrades pentaglycine cross-links in cell wall peptidoglycan), preferring Gly-Gly-|-X substrates where X is Ala or Gly. Enhances the elastolytic but not proteolytic activity of elastase (lasB) and elastolytic activity of other proteases. Degradation of host elastin is likely to contribute to the pathogenicity of P.aeruginosa. While either His-317 or His-356 can abstract a proton in the hydrolysis reaction, the same residue performs both functions in a given catalytic cycle, with the other stabilizing the catalytic intermediate. The chain is Protease LasA (lasA) from Pseudomonas aeruginosa (strain ATCC 15692 / DSM 22644 / CIP 104116 / JCM 14847 / LMG 12228 / 1C / PRS 101 / PAO1).